The chain runs to 614 residues: Zinc metalloproteinase-disintegrin-like VLAIP-B (614 aa).

The signal sequence occupies residues 1 to 20; the sequence is MMQVLLVTICLAVFPYQGSS. The propeptide occupies 21–193; that stretch reads IILESGNVND…KASQLNLTPE (173 aa). A Pyrrolidone carboxylic acid modification is found at glutamine 194. The Peptidase M12B domain occupies 202 to 398; sequence KYVELVIVAD…KMPQCILNKP (197 aa). A Ca(2+)-binding site is contributed by glutamate 205. Asparagine 262 carries an N-linked (GlcNAc...) asparagine glycan. Residue aspartate 289 coordinates Ca(2+). Cystine bridges form between cysteine 313/cysteine 393, cysteine 353/cysteine 377, and cysteine 355/cysteine 360. Histidine 338 is a binding site for Zn(2+). The active site involves glutamate 339. The Zn(2+) site is built by histidine 342 and histidine 348. Ca(2+)-binding residues include cysteine 393, asparagine 396, valine 408, asparagine 411, phenylalanine 413, glutamate 415, glutamate 418, and aspartate 421. In terms of domain architecture, Disintegrin spans 406–492; sequence PAVCGNYFVE…ECPTDQFQRN (87 aa). 14 disulfides stabilise this stretch: cysteine 409–cysteine 438, cysteine 420–cysteine 433, cysteine 422–cysteine 428, cysteine 432–cysteine 455, cysteine 446–cysteine 452, cysteine 451–cysteine 477, cysteine 464–cysteine 484, cysteine 471–cysteine 503, cysteine 496–cysteine 508, cysteine 515–cysteine 565, cysteine 530–cysteine 576, cysteine 543–cysteine 553, cysteine 560–cysteine 602, and cysteine 596–cysteine 607. Positions 470–472 match the D/ECD-tripeptide motif; the sequence is ECD. 3 N-linked (GlcNAc...) asparagine glycosylation sites follow: asparagine 505, asparagine 547, and asparagine 568.

It belongs to the venom metalloproteinase (M12B) family. P-III subfamily. P-IIIc sub-subfamily. In terms of assembly, heterodimer; disulfide-linked. The cofactor is Zn(2+). The N-terminus is blocked. As to expression, expressed by the venom gland.

The protein localises to the secreted. With respect to regulation, inhibited by EDTA or 1,10-phenanthroline. Not inhibited by PMSF. Its function is as follows. This metalloproteinase hydrolyzes azocasein, and insulin B-chain (at the '38-Ala-|-Leu-39' bond). Also hydrolyzes the Aalpha-chain (FGA) and more slowly the Bbeta-chain of fibrinogen (FGB), without affecting the gamma-chain. Cleaves alpha-chain of fibrinogen at '432-Lys-|-Leu-433' and '535-Pro-|-Met-536' bonds. Does not cleave fibrin. Inhibits endothelial cell adhesion to extracellular matrix proteins such as fibrinogen, fibronectin, vitronectin, collagen I, and collagen IV. Induces apoptosis in vascular endothelial cells. This is Zinc metalloproteinase-disintegrin-like VLAIP-B from Macrovipera lebetinus (Levantine viper).